The chain runs to 127 residues: Small ribosomal subunit protein uS17m (127 aa).

The protein belongs to the universal ribosomal protein uS17 family.

It is found in the mitochondrion. The sequence is that of Small ribosomal subunit protein uS17m (mrps17) from Dictyostelium discoideum (Social amoeba).